We begin with the raw amino-acid sequence, 759 residues long: MGLADASGPRDTQALLSATQAMDLRRRDYHMERPLLNQEHLEELGRWGSAPRTHQWRTWLQCSRARAYALLLQHLPVLVWLPRYPVRDWLLGDLLSGLSVAIMQLPQGLAYALLAGLPPVFGLYSSFYPVFIYFLFGTSRHISVGTFAVMSVMVGSVTESLAPQALNDSMINETARDAARVQVASTLSVLVGLFQVGLGLIHFGFVVTYLSEPLVRGYTTAAAVQVFVSQLKYVFGLHLSSHSGPLSLIYTVLEVCWKLPQSKVGTVVTAAVAGVVLVVVKLLNDKLQQQLPMPIPGELLTLIGATGISYGMGLKHRFEVDVVGNIPAGLVPPVAPNTQLFSKLVGSAFTIAVVGFAIAISLGKIFALRHGYRVDSNQELVALGLSNLIGGIFQCFPVSCSMSRSLVQESTGGNSQVAGAISSLFILLIIVKLGELFHDLPKAVLAAIIIVNLKGMLRQLSDMRSLWKANRADLLIWLVTFTATILLNLDLGLVVAVIFSLLLVVVRTQMPHYSVLGQVPDTDIYRDVAEYSEAKEVRGVKVFRSSATVYFANAEFYSDALKQRCGVDVDFLISQKKKLLKKQEQLKLKQLQKEEKLRKQAASPKGASVSINVNTSLEDMRSNNVEDCKMMQVSSGDKMEDATANGQEDSKAPDGSTLKALGLPQPDFHSLILDLGALSFVDTVCLKSLKNIFHDFREIEVEVYMAACHSPVVSQLEAGHFFDASITKKHLFASVHDAVTFALQHPRPVPDSPVSVTRL.

Topologically, residues 1–115 (MGLADASGPR…PQGLAYALLA (115 aa)) are cytoplasmic. Residues 116–136 (GLPPVFGLYSSFYPVFIYFLF) traverse the membrane as a helical segment. At 137–186 (GTSRHISVGTFAVMSVMVGSVTESLAPQALNDSMINETARDAARVQVAST) the chain is on the extracellular side. N-linked (GlcNAc) asparagine glycans are attached at residues asparagine 167 and asparagine 172. Residues 187–207 (LSVLVGLFQVGLGLIHFGFVV) form a helical membrane-spanning segment. Residues 208 to 263 (TYLSEPLVRGYTTAAAVQVFVSQLKYVFGLHLSSHSGPLSLIYTVLEVCWKLPQSK) lie on the Cytoplasmic side of the membrane. Residues 264-284 (VGTVVTAAVAGVVLVVVKLLN) form a helical membrane-spanning segment. The Extracellular segment spans residues 285 to 293 (DKLQQQLPM). A helical membrane pass occupies residues 294-314 (PIPGELLTLIGATGISYGMGL). The Cytoplasmic portion of the chain corresponds to 315-347 (KHRFEVDVVGNIPAGLVPPVAPNTQLFSKLVGS). A helical transmembrane segment spans residues 348–368 (AFTIAVVGFAIAISLGKIFAL). Over 369–379 (RHGYRVDSNQE) the chain is Extracellular. Residues 380-400 (LVALGLSNLIGGIFQCFPVSC) form a helical membrane-spanning segment. The Cytoplasmic segment spans residues 401–416 (SMSRSLVQESTGGNSQ). The helical transmembrane segment at 417-437 (VAGAISSLFILLIIVKLGELF) threads the bilayer. Residues 438-484 (HDLPKAVLAAIIIVNLKGMLRQLSDMRSLWKANRADLLIWLVTFTAT) lie on the Extracellular side of the membrane. Residues 485–505 (ILLNLDLGLVVAVIFSLLLVV) form a helical membrane-spanning segment. The Cytoplasmic portion of the chain corresponds to 506 to 759 (VRTQMPHYSV…PDSPVSVTRL (254 aa)). The STAS domain maps to 530 to 742 (EYSEAKEVRG…ASVHDAVTFA (213 aa)). Phosphoserine; by PKC is present on residues asparagine 553 and lysine 582. At serine 616 the chain carries Phosphoserine. The segment at 636-657 (GDKMEDATANGQEDSKAPDGST) is disordered. Residues serine 752 and serine 755 each carry the phosphoserine modification.

It belongs to the SLC26A/SulP transporter (TC 2.A.53) family. As to quaternary structure, interacts (via C-terminal domain) with PDZK1 (via C-terminal PDZ domain); the interaction induces chloride and oxalate exchange transport. Interacts with CFTR and SLC26A3. Interacts with AHCYL1; the interaction increases SLC26A6 activity. In terms of assembly, interacts with NHERF1 (via the PDZ domains) and NHERF2 (via the PDZ domains). Interacts (via C-terminal cytoplasmic domain) with CA2; the interaction stimulates chloride-bicarbonate exchange activity. Interacts with NHERF1 (via the PDZ domains) and NHERF2 (via the PDZ domains). Post-translationally, phosphorylated on serine residues by PKC; the phosphorylation disrupts interaction with carbonic anhydrase CA2 and reduces bicarbonate transport activity in a phorbol myristate acetate (PMA)-induced manner. Glycosylation at Asn-167 and Asn-172 positively regulates its chloride oxalate exchanger activity. In terms of tissue distribution, ubiquitous. Highest levels in kidney and pancreas. Lower expression in heart, skeletal muscle, liver and placenta. Also found in lung and brain. As to expression, ubiquitously expressed. Highest levels expressed in the kidney and pancreas. Expressed weakly in placenta, lung, liver and pancreas. In terms of tissue distribution, expressed in heart, brain, placenta, lung, liver, kidney, pancreas, spleen, thymus, prostate, testis and ovary.

Its subcellular location is the cell membrane. It localises to the apical cell membrane. The protein resides in the cytoplasmic vesicle membrane. The protein localises to the microsome. It is found in the basolateral cell membrane. The enzyme catalyses 2 hydrogencarbonate(in) + chloride(out) = 2 hydrogencarbonate(out) + chloride(in). The catalysed reaction is oxalate(in) + chloride(out) = oxalate(out) + chloride(in). It carries out the reaction oxalate(in) + formate(out) = oxalate(out) + formate(in). It catalyses the reaction oxalate(in) + sulfate(out) = oxalate(out) + sulfate(in). The enzyme catalyses 2 hydrogencarbonate(out) + sulfate(in) = 2 hydrogencarbonate(in) + sulfate(out). Its activity is regulated as follows. Oxalate transport activity is inhibited by 4,4'-diisothiocyanatostilbene-2,2'-disulfonic acid (DIDS). Chloride, bicarbonate and sulfate transport activities are inhibited by 4,4'-diisothiocyanatostilbene-2,2'-disulfonic acid (DIDS). Its function is as follows. Apical membrane anion-exchanger with wide epithelial distribution that plays a role as a component of the pH buffering system for maintaining acid-base homeostasis. Acts as a versatile DIDS-sensitive inorganic and organic anion transporter that mediates the uptake of monovalent anions like chloride, bicarbonate, formate and hydroxyl ion and divalent anions like sulfate and oxalate. Functions in multiple exchange modes involving pairs of these anions, which include chloride-bicarbonate, chloride-oxalate, oxalate-formate, oxalate-sulfate and chloride-formate exchange. Apical membrane chloride-bicarbonate exchanger that mediates luminal chloride absorption and bicarbonate secretion by the small intestinal brush border membrane and contributes to intracellular pH regulation in the duodenal upper villous epithelium during proton-coupled peptide absorption, possibly by providing a bicarbonate import pathway. Also mediates intestinal chloride absorption and oxalate secretion, thereby preventing hyperoxaluria and calcium oxalate urolithiasis. Transepithelial oxalate secretion, chloride-formate, chloride-oxalate and chloride-bicarbonate transport activities in the duodenum are inhibited by PKC activation in a calcium-independent manner. The apical membrane chloride-bicarbonate exchanger also provides a major route for fluid and bicarbonate secretion into the proximal tubules of the kidney as well as into the proximal part of the interlobular pancreatic ductal tree, where it mediates electrogenic chloride-bicarbonate exchange with a chloride-bicarbonate stoichiometry of 1:2, and hence will dilute and alkalinize protein-rich acinar secretion. Also mediates the transcellular sulfate absorption and oxalate secretion across the apical membrane in the duodenum and the formate ion efflux at the apical brush border of cells in the proximal tubules of kidney. Plays a role in sperm capacitation by increasing intracellular pH. Apical membrane chloride-bicarbonate exchanger. Its association with carbonic anhydrase CA2 forms a bicarbonate transport metabolon; hence maximizes the local concentration of bicarbonate at the transporter site. The sequence is that of Solute carrier family 26 member 6 (SLC26A6) from Homo sapiens (Human).